The following is a 478-amino-acid chain: Ankyrin repeat and BTB/POZ domain-containing protein 1 (478 aa).

2 ANK repeats span residues 1–31 (MDTS…EVNV) and 35–64 (WDST…RCEA). BTB domains are found at residues 115 to 182 (SDVV…DIGV) and 272 to 346 (PDIC…ELSP). Residues 451-477 (VQTYSAIEEAQQRLRALEDLLVSIGLD) are a coiled coil.

Ubiquitously expressed in all fetal tissues examined including heart, brain, liver, and kidney. Also expressed at lower levels in both adult heart and hypertrophic heart.

The protein localises to the cytoplasm. In terms of biological role, may act as a mediator of the PTEN growth-suppressive signaling pathway. May play a role in developmental processes. The polypeptide is Ankyrin repeat and BTB/POZ domain-containing protein 1 (Homo sapiens (Human)).